The following is a 365-amino-acid chain: uncharacterized protein (365 aa).

Basic and acidic residues-rich tracts occupy residues 1-27 (MDNV…EDHS) and 315-339 (AKDD…ETPK). Disordered stretches follow at residues 1 to 31 (MDNV…NSYQ) and 308 to 365 (KEEK…CLIS). The segment covering 340-353 (KASNTPRRNKSNTQ) has biased composition (polar residues).

It to yeast YGL082w. Interacts with sad1.

The protein resides in the cytoplasm. This is an uncharacterized protein from Schizosaccharomyces pombe (strain 972 / ATCC 24843) (Fission yeast).